Here is a 214-residue protein sequence, read N- to C-terminus: Large ribosomal subunit protein bL25 (214 aa).

Residues 178–214 (VEPEEEELPETDEEGEGAEGEAAEAAEGESAEGESEE) are disordered. The segment covering 179–214 (EPEEEELPETDEEGEGAEGEAAEAAEGESAEGESEE) has biased composition (acidic residues).

It belongs to the bacterial ribosomal protein bL25 family. CTC subfamily. As to quaternary structure, part of the 50S ribosomal subunit; part of the 5S rRNA/L5/L18/L25 subcomplex. Contacts the 5S rRNA. Binds to the 5S rRNA independently of L5 and L18.

In terms of biological role, this is one of the proteins that binds to the 5S RNA in the ribosome where it forms part of the central protuberance. The protein is Large ribosomal subunit protein bL25 of Corynebacterium jeikeium (strain K411).